We begin with the raw amino-acid sequence, 867 residues long: Cadherin-related family member 1 (867 aa).

The signal sequence occupies residues 1-21; it reads MKHEWNLCPSIFFSIFHICLS. Residues 22 to 707 lie on the Extracellular side of the membrane; that stretch reads VQTNYGPYFF…SKDNPMKALG (686 aa). Cadherin domains are found at residues 39–138, 139–250, 251–357, 363–476, 477–580, and 572–692; these read NGNM…SPGF, LNTP…PPVF, VGTP…PPTF, PQNR…VPRF, SSEY…SPEF, and DIND…GPMA. Residues 708–728 traverse the membrane as a helical segment; it reads VLAGVMAIMVVITIFISTAMF. At 729 to 867 the chain is on the cytoplasmic side; that stretch reads WRNKKSNRVM…KNAGSSMSFY (139 aa). Residues 777-825 form a disordered region; sequence EMESGPKNENRNNNYQGIPVPPRAPCPPPPPRLMPKVSKTERSLPTVSG. A compositionally biased stretch (pro residues) spans 795 to 809; sequence PVPPRAPCPPPPPRL.

Expressed in photoreceptor cells of the outer nuclear layer of the retina and in the pinal gland.

The protein resides in the membrane. Its function is as follows. Potential calcium-dependent cell-adhesion protein. In Xenopus laevis (African clawed frog), this protein is Cadherin-related family member 1 (cdhr1).